The following is a 113-amino-acid chain: Putative membrane protein insertion efficiency factor (113 aa).

The protein belongs to the UPF0161 family.

The protein localises to the cell inner membrane. Could be involved in insertion of integral membrane proteins into the membrane. This Campylobacter jejuni subsp. jejuni serotype O:23/36 (strain 81-176) protein is Putative membrane protein insertion efficiency factor.